The sequence spans 921 residues: TRPM8 channel-associated factor 1 (921 aa).

The region spanning 542-841 (YCWMSTGLYI…TYLQLQEAFG (300 aa)) is the Peptidase M60 domain.

It belongs to the TCAF family. As to quaternary structure, interacts with TRPM8 (via N-terminus and C-terminus domains); the interaction inhibits TRPM8 channel activity. Interacts with TRPV6.

The protein resides in the cell membrane. Functionally, positively regulates the plasma membrane cation channel TRPM8 activity. Involved in the recruitment of TRPM8 to the cell surface. Promotes prostate cancer cell migration inhibition in a TRPM8-dependent manner. This Pongo abelii (Sumatran orangutan) protein is TRPM8 channel-associated factor 1.